A 100-amino-acid polypeptide reads, in one-letter code: HssA/B-like protein 37 (100 aa).

Disordered regions lie at residues 1–29 (MTLF…SGTS) and 67–100 (RSRG…CCGI). Over residues 71 to 93 (SCGGNRGNGNGNGGMGGGNGSCC) the composition is skewed to gly residues.

This sequence belongs to the hssA/B family.

This Dictyostelium discoideum (Social amoeba) protein is HssA/B-like protein 37 (hssl37).